The following is an 87-amino-acid chain: U3-theraphotoxin-Hhn1i (87 aa).

The signal sequence occupies residues 1–24 (MVNMEASMFLTFAGLVLLFVVCYA). The propeptide occupies 25 to 52 (SESEEKEFPKEMLSSIFAVDNDFKQEER). Disulfide bonds link Cys54–Cys67, Cys61–Cys72, and Cys66–Cys79.

It belongs to the neurotoxin 10 (Hwtx-1) family. 51 (Hntx-8) subfamily. Hntx-8 sub-subfamily. Expressed by the venom gland.

The protein resides in the secreted. Ion channel inhibitor. In Cyriopagopus hainanus (Chinese bird spider), this protein is U3-theraphotoxin-Hhn1i.